Consider the following 807-residue polypeptide: Histone transcription regulator slm9 (807 aa).

WD repeat units follow at residues 62–100 and 102–140; these read SFDS…KAFQ and LSGP…ETIV. The tract at residues 144 to 164 is disordered; it reads EHADSNHQPAVSIEESKEAVE. WD repeat units follow at residues 182 to 221, 230 to 273, 276 to 322, and 326 to 367; these read GHHT…VEKS, PTGN…YDIN, GHQG…PMAV, and LSCS…EKMD. The interval 388-437 is disordered; the sequence is NKNAAADRTTSPTQGQPESPSKSILLRPPPSIASSPESKRRKCPKKFVAR. Polar residues predominate over residues 395–409; sequence RTTSPTQGQPESPSK. Residues Ser406, Ser421, and Ser422 each carry the phosphoserine modification. A compositionally biased stretch (basic residues) spans 426–435; that stretch reads KRRKCPKKFV. WD repeat units lie at residues 492-526 and 528-574; these read DCSW…YIYS and AGRL…AIHS.

Belongs to the WD repeat HIR1 family. Interacts with hip1 and hip3.

The protein localises to the cytoplasm. Its subcellular location is the nucleus. Probably required for replication-independent chromatin assembly. Required for transcriptional silencing in the outer repeat (otr) centromeric repeats and the Tf2 long terminal repeat retrotransposons. May play an indirect role in the regulation of cdc2 and/or wee1 at the G2/M stage of mitosis. The chain is Histone transcription regulator slm9 (slm9) from Schizosaccharomyces pombe (strain 972 / ATCC 24843) (Fission yeast).